We begin with the raw amino-acid sequence, 475 residues long: Putative response regulator NtrX-like (475 aa).

The Response regulatory domain occupies 5-121; it reads DVLIVDDEES…KLVILLKRAC (117 aa). Asp54 is modified (4-aspartylphosphate). The Sigma-54 factor interaction domain maps to 143–369; that stretch reads LVGGCSVTLK…LRNVVEWTLI (227 aa). ATP contacts are provided by residues 171–178 and 232–241; these read GKVGSGKE and ANNGTLYIDE.

Its function is as follows. Member of the two-component regulatory system RF_0895/RF_0427. This is Putative response regulator NtrX-like from Rickettsia felis (strain ATCC VR-1525 / URRWXCal2) (Rickettsia azadi).